The chain runs to 356 residues: Probable neutral protease 2 homolog TRV_06370 (356 aa).

Positions 1–17 (MQFTALLAALGAPLALA) are cleaved as a signal peptide. The propeptide occupies 18–183 (ASIPAAAHNH…DDSTGVIDKR (166 aa)). Cystine bridges form between Cys191-Cys262 and Cys269-Cys287. His311 lines the Zn(2+) pocket. Glu312 is an active-site residue. Residues His315 and Asp326 each coordinate Zn(2+).

This sequence belongs to the peptidase M35 family. Zn(2+) is required as a cofactor.

The protein resides in the secreted. The enzyme catalyses Preferential cleavage of bonds with hydrophobic residues in P1'. Also 3-Asn-|-Gln-4 and 8-Gly-|-Ser-9 bonds in insulin B chain.. Functionally, probable secreted metalloprotease that shows high activities on basic nuclear substrates such as histone and protamine. May be involved in virulence. This Trichophyton verrucosum (strain HKI 0517) protein is Probable neutral protease 2 homolog TRV_06370.